Reading from the N-terminus, the 531-residue chain is CTP synthase (531 aa).

An amidoligase domain region spans residues 1–267; sequence MTKYIFVTGG…DQIVCEHLRL (267 aa). Ser-13 contacts CTP. UTP is bound at residue Ser-13. 14-19 serves as a coordination point for ATP; that stretch reads SLGKGI. Tyr-54 contacts L-glutamine. An ATP-binding site is contributed by Asp-71. Mg(2+)-binding residues include Asp-71 and Glu-141. Residues 148-150, 188-193, and Lys-224 contribute to the CTP site; these read DIE and KTKPTQ. UTP-binding positions include 188 to 193 and Lys-224; that span reads KTKPTQ. 240–242 lines the ATP pocket; the sequence is RDA. Positions 292–531 constitute a Glutamine amidotransferase type-1 domain; sequence KIALVGKYVE…REFVRASLKE (240 aa). L-glutamine is bound at residue Gly-354. Cys-381 (nucleophile; for glutamine hydrolysis) is an active-site residue. L-glutamine contacts are provided by residues 382 to 385, Glu-405, and Arg-462; that span reads LGMQ. Active-site residues include His-507 and Glu-509.

This sequence belongs to the CTP synthase family. In terms of assembly, homotetramer.

It carries out the reaction UTP + L-glutamine + ATP + H2O = CTP + L-glutamate + ADP + phosphate + 2 H(+). The catalysed reaction is L-glutamine + H2O = L-glutamate + NH4(+). It catalyses the reaction UTP + NH4(+) + ATP = CTP + ADP + phosphate + 2 H(+). It functions in the pathway pyrimidine metabolism; CTP biosynthesis via de novo pathway; CTP from UDP: step 2/2. Allosterically activated by GTP, when glutamine is the substrate; GTP has no effect on the reaction when ammonia is the substrate. The allosteric effector GTP functions by stabilizing the protein conformation that binds the tetrahedral intermediate(s) formed during glutamine hydrolysis. Inhibited by the product CTP, via allosteric rather than competitive inhibition. Catalyzes the ATP-dependent amination of UTP to CTP with either L-glutamine or ammonia as the source of nitrogen. Regulates intracellular CTP levels through interactions with the four ribonucleotide triphosphates. The sequence is that of CTP synthase from Geobacillus kaustophilus (strain HTA426).